Consider the following 403-residue polypeptide: Leu/Ile/Val-binding protein homolog 8 (403 aa).

A signal peptide spans 1–26 (MRLSRLLIGASLGVALSSTAFTAALA).

The protein belongs to the leucine-binding protein family.

Functionally, component of an amino-acid transport system. The polypeptide is Leu/Ile/Val-binding protein homolog 8 (Brucella suis biovar 1 (strain 1330)).